The sequence spans 308 residues: tRNA dimethylallyltransferase (308 aa).

Residue 14–21 participates in ATP binding; the sequence is GPTASGKT. Residue 16-21 participates in substrate binding; it reads TASGKT. Interaction with substrate tRNA regions lie at residues 39-42, 163-167, and 244-249; these read DSAL, QRLSR, and RCVGYR.

It belongs to the IPP transferase family. In terms of assembly, monomer. It depends on Mg(2+) as a cofactor.

It catalyses the reaction adenosine(37) in tRNA + dimethylallyl diphosphate = N(6)-dimethylallyladenosine(37) in tRNA + diphosphate. Catalyzes the transfer of a dimethylallyl group onto the adenine at position 37 in tRNAs that read codons beginning with uridine, leading to the formation of N6-(dimethylallyl)adenosine (i(6)A). The chain is tRNA dimethylallyltransferase from Shewanella loihica (strain ATCC BAA-1088 / PV-4).